The sequence spans 320 residues: Malate dehydrogenase (320 aa).

Residues 10 to 15 (GSGMIG) and aspartate 34 each bind NAD(+). 2 residues coordinate substrate: arginine 83 and arginine 89. NAD(+)-binding positions include asparagine 96 and 119–121 (ITN). Substrate-binding residues include asparagine 121 and arginine 152. Catalysis depends on histidine 176, which acts as the Proton acceptor.

This sequence belongs to the LDH/MDH superfamily. MDH type 3 family.

The enzyme catalyses (S)-malate + NAD(+) = oxaloacetate + NADH + H(+). Catalyzes the reversible oxidation of malate to oxaloacetate. The polypeptide is Malate dehydrogenase (Rhizobium etli (strain CIAT 652)).